A 342-amino-acid polypeptide reads, in one-letter code: Dihydroorotase (342 aa).

Zn(2+)-binding residues include His13 and His15. Substrate contacts are provided by residues 15–17 (HLR) and Asn41. Positions 98, 135, and 173 each coordinate Zn(2+). The residue at position 98 (Lys98) is an N6-carboxylysine. Residue His135 coordinates substrate. A substrate-binding site is contributed by Leu218. A Zn(2+)-binding site is contributed by Asp246. Asp246 is a catalytic residue. Positions 250 and 262 each coordinate substrate.

Belongs to the metallo-dependent hydrolases superfamily. DHOase family. Class II DHOase subfamily. In terms of assembly, homodimer. Zn(2+) is required as a cofactor.

The enzyme catalyses (S)-dihydroorotate + H2O = N-carbamoyl-L-aspartate + H(+). It functions in the pathway pyrimidine metabolism; UMP biosynthesis via de novo pathway; (S)-dihydroorotate from bicarbonate: step 3/3. Catalyzes the reversible cyclization of carbamoyl aspartate to dihydroorotate. This Vibrio parahaemolyticus serotype O3:K6 (strain RIMD 2210633) protein is Dihydroorotase.